A 177-amino-acid chain; its full sequence is MIGSFLTRGLLMVFGYAYPAYECFKTVELNKPEIQQLQFWCQYWIIVAALTIFERIGDALVSWLPMYSEAKLAFFIYLWFPKTKGTTYVYDSFFRPYIAKHENEIDRNLVKVKTRAKDMAMIYLQKAINQGQTKFFEILQYITEQSTPKSKAEEKKETTIPKLDDPILKVKENEVTK.

A disordered region spans residues 145–165 (QSTPKSKAEEKKETTIPKLDD). Residues 150–165 (SKAEEKKETTIPKLDD) show a composition bias toward basic and acidic residues.

It belongs to the DP1 family.

This Arabidopsis thaliana (Mouse-ear cress) protein is Putative HVA22-like protein g (HVA22G).